Here is a 165-residue protein sequence, read N- to C-terminus: Methylated-DNA--protein-cysteine methyltransferase (165 aa).

C126 functions as the Nucleophile; methyl group acceptor in the catalytic mechanism.

Belongs to the MGMT family.

It localises to the cytoplasm. The enzyme catalyses a 6-O-methyl-2'-deoxyguanosine in DNA + L-cysteinyl-[protein] = S-methyl-L-cysteinyl-[protein] + a 2'-deoxyguanosine in DNA. It carries out the reaction a 4-O-methyl-thymidine in DNA + L-cysteinyl-[protein] = a thymidine in DNA + S-methyl-L-cysteinyl-[protein]. Functionally, involved in the cellular defense against the biological effects of O6-methylguanine (O6-MeG) and O4-methylthymine (O4-MeT) in DNA. Repairs the methylated nucleobase in DNA by stoichiometrically transferring the methyl group to a cysteine residue in the enzyme. This is a suicide reaction: the enzyme is irreversibly inactivated. This is Methylated-DNA--protein-cysteine methyltransferase from Mycolicibacterium paratuberculosis (strain ATCC BAA-968 / K-10) (Mycobacterium paratuberculosis).